The chain runs to 36 residues: Potassium channel toxin alpha-KTx 6.14 (36 aa).

4 disulfide bridges follow: Cys-5–Cys-25, Cys-11–Cys-30, Cys-15–Cys-32, and Cys-20–Cys-35.

In terms of tissue distribution, expressed by the venom gland.

The protein resides in the secreted. Functionally, blocks Shaker B channels expressed in Sf9 cells, with a dissociation constant of 52 nM. This is Potassium channel toxin alpha-KTx 6.14 from Hoffmannihadrurus gertschi (Scorpion).